The primary structure comprises 1029 residues: Carbamoyl phosphate synthase large chain (1029 aa).

Residues 1–402 form a carboxyphosphate synthetic domain region; the sequence is MPKRTDLQTI…SLQKALRSTE (402 aa). ATP is bound by residues Arg-129, Arg-169, Gly-175, Gly-176, Glu-208, Ile-210, Glu-215, Gly-241, Val-242, His-243, Gln-285, and Glu-299. In terms of domain architecture, ATP-grasp 1 spans 133–328; it reads QAAMKKIGVE…IAKIAALLAV (196 aa). Mg(2+) contacts are provided by Gln-285, Glu-299, and Asn-301. The Mn(2+) site is built by Gln-285, Glu-299, and Asn-301. The interval 403–544 is oligomerization domain; it reads SDIRGVYAEM…YHYSTYEWED (142 aa). The interval 545–929 is carbamoyl phosphate synthetic domain; that stretch reads EVTGTDKPKV…AFYRAQLGAK (385 aa). Residues 671 to 863 form the ATP-grasp 2 domain; that stretch reads NALCERLGLS…LAKSAARIAV (193 aa). Residues Arg-707, Gln-747, Leu-749, Glu-754, Gly-779, Val-780, His-781, Ser-782, Gln-822, and Glu-834 each coordinate ATP. Residues Gln-822, Glu-834, and Asn-836 each contribute to the Mg(2+) site. Residues Gln-822, Glu-834, and Asn-836 each coordinate Mn(2+). Residues 930 to 1028 enclose the MGS-like domain; sequence SYLPLSGTAL…QDWQTQEAVA (99 aa). The tract at residues 930–1029 is allosteric domain; that stretch reads SYLPLSGTAL…DWQTQEAVAG (100 aa).

The protein belongs to the CarB family. Composed of two chains; the small (or glutamine) chain promotes the hydrolysis of glutamine to ammonia, which is used by the large (or ammonia) chain to synthesize carbamoyl phosphate. Tetramer of heterodimers (alpha,beta)4. Mg(2+) serves as cofactor. Mn(2+) is required as a cofactor.

The catalysed reaction is hydrogencarbonate + L-glutamine + 2 ATP + H2O = carbamoyl phosphate + L-glutamate + 2 ADP + phosphate + 2 H(+). The enzyme catalyses hydrogencarbonate + NH4(+) + 2 ATP = carbamoyl phosphate + 2 ADP + phosphate + 2 H(+). It participates in amino-acid biosynthesis; L-arginine biosynthesis; carbamoyl phosphate from bicarbonate: step 1/1. Its pathway is pyrimidine metabolism; UMP biosynthesis via de novo pathway; (S)-dihydroorotate from bicarbonate: step 1/3. Functionally, large subunit of the glutamine-dependent carbamoyl phosphate synthetase (CPSase). CPSase catalyzes the formation of carbamoyl phosphate from the ammonia moiety of glutamine, carbonate, and phosphate donated by ATP, constituting the first step of 2 biosynthetic pathways, one leading to arginine and/or urea and the other to pyrimidine nucleotides. The large subunit (synthetase) binds the substrates ammonia (free or transferred from glutamine from the small subunit), hydrogencarbonate and ATP and carries out an ATP-coupled ligase reaction, activating hydrogencarbonate by forming carboxy phosphate which reacts with ammonia to form carbamoyl phosphate. The chain is Carbamoyl phosphate synthase large chain from Deinococcus deserti (strain DSM 17065 / CIP 109153 / LMG 22923 / VCD115).